The following is a 248-amino-acid chain: Ubiquinone biosynthesis O-methyltransferase (248 aa).

4 residues coordinate S-adenosyl-L-methionine: R40, G71, D92, and M135.

The protein belongs to the methyltransferase superfamily. UbiG/COQ3 family.

The catalysed reaction is a 3-demethylubiquinol + S-adenosyl-L-methionine = a ubiquinol + S-adenosyl-L-homocysteine + H(+). It carries out the reaction a 3-(all-trans-polyprenyl)benzene-1,2-diol + S-adenosyl-L-methionine = a 2-methoxy-6-(all-trans-polyprenyl)phenol + S-adenosyl-L-homocysteine + H(+). Its pathway is cofactor biosynthesis; ubiquinone biosynthesis. Functionally, O-methyltransferase that catalyzes the 2 O-methylation steps in the ubiquinone biosynthetic pathway. The polypeptide is Ubiquinone biosynthesis O-methyltransferase (Roseobacter denitrificans (strain ATCC 33942 / OCh 114) (Erythrobacter sp. (strain OCh 114))).